A 213-amino-acid polypeptide reads, in one-letter code: Adenylate kinase (213 aa).

10 to 15 (GAGKGT) is an ATP binding site. The tract at residues 30–59 (STGDMFRAAIKEGTEMGKKAKEYMDKGALV) is NMP. AMP is bound by residues T31, R36, 57–59 (ALV), 85–88 (GFPR), and Q92. Positions 126 to 163 (GRRVCKNCGASYHVIFNPPQAEGKCNSCNGELYQRSDD) are LID. R127 contributes to the ATP binding site. Residues C130 and C133 each coordinate Zn(2+). 136–137 (SY) serves as a coordination point for ATP. C150 and C153 together coordinate Zn(2+). Residues R160 and R171 each contribute to the AMP site. Position 199 (Q199) interacts with ATP.

It belongs to the adenylate kinase family. In terms of assembly, monomer.

Its subcellular location is the cytoplasm. The enzyme catalyses AMP + ATP = 2 ADP. It functions in the pathway purine metabolism; AMP biosynthesis via salvage pathway; AMP from ADP: step 1/1. Its function is as follows. Catalyzes the reversible transfer of the terminal phosphate group between ATP and AMP. Plays an important role in cellular energy homeostasis and in adenine nucleotide metabolism. In Desulforamulus reducens (strain ATCC BAA-1160 / DSM 100696 / MI-1) (Desulfotomaculum reducens), this protein is Adenylate kinase.